Consider the following 520-residue polypeptide: GMP synthase [glutamine-hydrolyzing] (520 aa).

Residues 12–202 (KIIVLDFGSQ…AFDVCGCTGD (191 aa)) enclose the Glutamine amidotransferase type-1 domain. The Nucleophile role is filled by cysteine 89. Residues histidine 176 and glutamate 178 contribute to the active site. The GMPS ATP-PPase domain maps to 203–395 (WSMENFIDME…LGMPDAIVWR (193 aa)). Residue 230–236 (SGGVDSS) coordinates ATP.

Homodimer.

The catalysed reaction is XMP + L-glutamine + ATP + H2O = GMP + L-glutamate + AMP + diphosphate + 2 H(+). The protein operates within purine metabolism; GMP biosynthesis; GMP from XMP (L-Gln route): step 1/1. In terms of biological role, catalyzes the synthesis of GMP from XMP. In Enterococcus faecalis (strain ATCC 700802 / V583), this protein is GMP synthase [glutamine-hydrolyzing].